The sequence spans 953 residues: Coatomer subunit beta (953 aa).

Threonine 2 carries the N-acetylthreonine modification. 6 HEAT repeats span residues 96 to 131 (HEMILVCDAYRKDLQHPNEFIRGSTLRFLCKLKEAE), 132 to 168 (LLEPLMPAIRACLEHRHSYVRRNAVLAIYTIYRNFEH), 240 to 276 (SERARFIRCIYNLLQSSSPAVKYEAAGTLVTLSSAPT), 277 to 314 (AIKAAAQCYIDLIIKESDNNVKLIVLDRLIELKEHPAH), 316 to 353 (RVLQDLVMDILRVLSTPDLEVRKKTLQLALDLVSSRNV), and 396 to 433 (DMAANVIPVLMEFLSDNNEAAAADVLEFVREAIQRFDN). Residue lysine 494 is modified to N6-acetyllysine.

Oligomeric complex that consists of at least the alpha, beta, beta', gamma, delta, epsilon and zeta subunits. Interacts (via C-terminus) with HIV-1 Nef; the interaction is direct. Interacts with CAPN8 and PRKCE. Interacts with SCYL1. Interacts with COPG1. Interacts with ARF1 (myristoylated); this interaction is required for binding of COPB1 to Golgi membranes. Interacts (via trunk domain) with ARF1 (via switch I region); the interaction is direct. Interacts with KCNK2 (via N-terminus); this interaction increases the channel-mediated whole cell currents and promotes plasma membrane expression of KCNK2. Interacts with anthrax lethal factor (LF); this interaction may facilitate endosomal vesicle membrane translocation of LF and its release from the lumen of endosomal vesicles to external milieu. Interacts with STX17. Interacts with TMEM115. Interacts with TMEM41B.

It is found in the cytoplasm. The protein localises to the golgi apparatus membrane. The protein resides in the cytoplasmic vesicle. It localises to the COPI-coated vesicle membrane. Its subcellular location is the cell membrane. It is found in the endoplasmic reticulum-Golgi intermediate compartment. Functionally, the coatomer is a cytosolic protein complex that binds to dilysine motifs and reversibly associates with Golgi non-clathrin-coated vesicles, which further mediate biosynthetic protein transport from the ER, via the Golgi up to the trans Golgi network. Coatomer complex is required for budding from Golgi membranes, and is essential for the retrograde Golgi-to-ER transport of dilysine-tagged proteins. In mammals, the coatomer can only be recruited by membranes associated to ADP-ribosylation factors (ARFs), which are small GTP-binding proteins; the complex also influences the Golgi structural integrity, as well as the processing, activity, and endocytic recycling of LDL receptors. Plays a functional role in facilitating the transport of kappa-type opioid receptor mRNAs into axons and enhances translation of these proteins. Required for limiting lipid storage in lipid droplets. Involved in lipid homeostasis by regulating the presence of perilipin family members PLIN2 and PLIN3 at the lipid droplet surface and promoting the association of adipocyte surface triglyceride lipase (PNPLA2) with the lipid droplet to mediate lipolysis. Involved in the Golgi disassembly and reassembly processes during cell cycle. Involved in autophagy by playing a role in early endosome function. Plays a role in organellar compartmentalization of secretory compartments including endoplasmic reticulum (ER)-Golgi intermediate compartment (ERGIC), Golgi, trans-Golgi network (TGN) and recycling endosomes, and in biosynthetic transport of CAV1. Promotes degradation of Nef cellular targets CD4 and MHC class I antigens by facilitating their trafficking to degradative compartments. The sequence is that of Coatomer subunit beta (COPB1) from Pongo abelii (Sumatran orangutan).